Reading from the N-terminus, the 290-residue chain is Porphobilinogen deaminase (290 aa).

Cys-237 is modified (S-(dipyrrolylmethanemethyl)cysteine).

The protein belongs to the HMBS family. In terms of assembly, monomer. It depends on dipyrromethane as a cofactor.

The enzyme catalyses 4 porphobilinogen + H2O = hydroxymethylbilane + 4 NH4(+). Its pathway is porphyrin-containing compound metabolism; protoporphyrin-IX biosynthesis; coproporphyrinogen-III from 5-aminolevulinate: step 2/4. In terms of biological role, tetrapolymerization of the monopyrrole PBG into the hydroxymethylbilane pre-uroporphyrinogen in several discrete steps. This Clostridium kluyveri (strain NBRC 12016) protein is Porphobilinogen deaminase.